Here is a 601-residue protein sequence, read N- to C-terminus: Invasin CotH3 (601 aa).

The first 17 residues, 1-17 (MKLSIISAAFLVAITHA), serve as a signal peptide directing secretion. Asparagine 28, asparagine 85, asparagine 170, asparagine 324, asparagine 449, asparagine 527, asparagine 541, asparagine 554, asparagine 561, and asparagine 571 each carry an N-linked (GlcNAc...) asparagine glycan. The span at 539 to 579 (SANGTTAAAPAPAAGNSTGKGGNQSISSSASSNKTSAQSTS) shows a compositional bias: low complexity. The disordered stretch occupies residues 539–581 (SANGTTAAAPAPAAGNSTGKGGNQSISSSASSNKTSAQSTSGA). Serine 579 is lipidated: GPI-anchor amidated serine. Residues 580 to 601 (GASRSKTAPIVLAISALALLVF) constitute a propeptide, removed in mature form.

In terms of assembly, interacts with HSPA5/BiP on the cell surface of host nasal epithelial cells.

It is found in the cell membrane. Its function is as follows. Promotes invasion of host epithelial cells by adhering to receptors on the host cell surface to facilitate endocytosis of the pathogen into host cells. Binds HSPA5/BiP protein on the cell surface of host nasal epithelial cells. The protein is Invasin CotH3 of Rhizopus delemar (strain RA 99-880 / ATCC MYA-4621 / FGSC 9543 / NRRL 43880) (Mucormycosis agent).